Reading from the N-terminus, the 556-residue chain is Oxygen-dependent choline dehydrogenase (556 aa).

4–33 contacts FAD; that stretch reads DYIIIGAGSAGNVLATRLTEDPNTTVLLLE. His-473 serves as the catalytic Proton acceptor.

The protein belongs to the GMC oxidoreductase family. It depends on FAD as a cofactor.

The catalysed reaction is choline + A = betaine aldehyde + AH2. It carries out the reaction betaine aldehyde + NAD(+) + H2O = glycine betaine + NADH + 2 H(+). Its pathway is amine and polyamine biosynthesis; betaine biosynthesis via choline pathway; betaine aldehyde from choline (cytochrome c reductase route): step 1/1. In terms of biological role, involved in the biosynthesis of the osmoprotectant glycine betaine. Catalyzes the oxidation of choline to betaine aldehyde and betaine aldehyde to glycine betaine at the same rate. This is Oxygen-dependent choline dehydrogenase from Escherichia coli O127:H6 (strain E2348/69 / EPEC).